We begin with the raw amino-acid sequence, 289 residues long: ATP synthase gamma chain (289 aa).

Belongs to the ATPase gamma chain family. F-type ATPases have 2 components, CF(1) - the catalytic core - and CF(0) - the membrane proton channel. CF(1) has five subunits: alpha(3), beta(3), gamma(1), delta(1), epsilon(1). CF(0) has three main subunits: a, b and c.

The protein localises to the cell inner membrane. Functionally, produces ATP from ADP in the presence of a proton gradient across the membrane. The gamma chain is believed to be important in regulating ATPase activity and the flow of protons through the CF(0) complex. This Coxiella burnetii (strain CbuG_Q212) (Coxiella burnetii (strain Q212)) protein is ATP synthase gamma chain.